The primary structure comprises 144 residues: Leghemoglobin-1 (144 aa).

The Globin domain occupies glycine 2 to alanine 144. Residues tyrosine 25 and tyrosine 30 each carry the nitrated tyrosine modification. Position 45 (serine 45) interacts with heme b. Serine 45 is modified (phosphoserine). Residue histidine 62 coordinates O2. Residues lysine 65, histidine 93, and lysine 96 each coordinate heme b. Nitrated tyrosine is present on tyrosine 134.

It belongs to the plant globin family. Monomer. Nitrated in effective nodules and particularly in hypoxic conditions; this mechanism may play a protective role in the symbiosis by buffering toxic peroxynitrite NO(2)(-). Nitration level decrease during nodule senescence. Post-translationally, phosphorylation at Ser-45 disrupts the molecular environment of its porphyrin ring oxygen binding pocket, thus leading to a reduced oxygen consumption and to the delivery of oxygen O(2) to symbiosomes. As to expression, root nodules.

The protein localises to the cytoplasm. The protein resides in the cytosol. Its subcellular location is the nucleus. Functionally, leghemoglobin that reversibly binds oxygen O(2) through a pentacoordinated heme iron. In root nodules, facilitates the diffusion of oxygen to the bacteroids while preventing the bacterial nitrogenase from being inactivated by buffering dioxygen, nitric oxide and carbon monoxide, and promoting the formation of reactive oxygen species (ROS, e.g. H(2)O(2)). This role is essential for symbiotic nitrogen fixation (SNF). This chain is Leghemoglobin-1, found in Vicia faba (Broad bean).